We begin with the raw amino-acid sequence, 114 residues long: Large ribosomal subunit protein eL30 (114 aa).

The protein belongs to the eukaryotic ribosomal protein eL30 family.

This is Large ribosomal subunit protein eL30 (RPL30) from Branchiostoma belcheri (Amphioxus).